Consider the following 431-residue polypeptide: Enolase (431 aa).

Gln162 lines the (2R)-2-phosphoglycerate pocket. The active-site Proton donor is Glu204. Mg(2+) is bound by residues Asp241, Glu284, and Asp311. (2R)-2-phosphoglycerate is bound by residues Lys336, Arg365, Ser366, and Lys387. Lys336 serves as the catalytic Proton acceptor.

This sequence belongs to the enolase family. Mg(2+) serves as cofactor.

Its subcellular location is the cytoplasm. The protein localises to the secreted. It localises to the cell surface. It carries out the reaction (2R)-2-phosphoglycerate = phosphoenolpyruvate + H2O. It functions in the pathway carbohydrate degradation; glycolysis; pyruvate from D-glyceraldehyde 3-phosphate: step 4/5. In terms of biological role, catalyzes the reversible conversion of 2-phosphoglycerate (2-PG) into phosphoenolpyruvate (PEP). It is essential for the degradation of carbohydrates via glycolysis. The protein is Enolase of Sorangium cellulosum (strain So ce56) (Polyangium cellulosum (strain So ce56)).